The sequence spans 134 residues: Methylglyoxal synthase (134 aa).

Positions 1–134 constitute an MGS-like domain; that stretch reads MVNLNIALIA…GLLEWRNAVK (134 aa). Substrate contacts are provided by residues His11, Lys15, and 37-40; that span reads TGAT. The Proton donor/acceptor role is filled by Asp63. His90 provides a ligand contact to substrate.

It belongs to the methylglyoxal synthase family.

It carries out the reaction dihydroxyacetone phosphate = methylglyoxal + phosphate. In terms of biological role, catalyzes the formation of methylglyoxal from dihydroxyacetone phosphate. This is Methylglyoxal synthase from Thermoanaerobacterium thermosaccharolyticum (Clostridium thermosaccharolyticum).